The following is a 142-amino-acid chain: Hemoglobin subunit alpha-4 (142 aa).

Positions 2–142 constitute a Globin domain; sequence VLSAADKSNV…VSTVLTSKYR (141 aa). Histidine 59 provides a ligand contact to O2. A heme b-binding site is contributed by histidine 88.

It belongs to the globin family. Heterotetramer of two alpha chains and two beta chains. As to expression, red blood cells.

In terms of biological role, involved in oxygen transport from the lung to the various peripheral tissues. This is Hemoglobin subunit alpha-4 from Bubalus bubalis (Domestic water buffalo).